Here is a 99-residue protein sequence, read N- to C-terminus: Large ribosomal subunit protein bL27 (99 aa).

A propeptide spanning residues 1-9 (MLIMNLQLF) is cleaved from the precursor.

The protein belongs to the bacterial ribosomal protein bL27 family. Post-translationally, the N-terminus is cleaved by ribosomal processing cysteine protease Prp.

This chain is Large ribosomal subunit protein bL27, found in Clostridium beijerinckii (strain ATCC 51743 / NCIMB 8052) (Clostridium acetobutylicum).